The primary structure comprises 245 residues: 1-(5-phosphoribosyl)-5-[(5-phosphoribosylamino)methylideneamino] imidazole-4-carboxamide isomerase (245 aa).

Aspartate 8 (proton acceptor) is an active-site residue. Aspartate 130 (proton donor) is an active-site residue.

The protein belongs to the HisA/HisF family.

Its subcellular location is the cytoplasm. It carries out the reaction 1-(5-phospho-beta-D-ribosyl)-5-[(5-phospho-beta-D-ribosylamino)methylideneamino]imidazole-4-carboxamide = 5-[(5-phospho-1-deoxy-D-ribulos-1-ylimino)methylamino]-1-(5-phospho-beta-D-ribosyl)imidazole-4-carboxamide. The protein operates within amino-acid biosynthesis; L-histidine biosynthesis; L-histidine from 5-phospho-alpha-D-ribose 1-diphosphate: step 4/9. In Pseudomonas entomophila (strain L48), this protein is 1-(5-phosphoribosyl)-5-[(5-phosphoribosylamino)methylideneamino] imidazole-4-carboxamide isomerase.